The sequence spans 139 residues: Large ribosomal subunit protein bL17 (139 aa).

The protein belongs to the bacterial ribosomal protein bL17 family. As to quaternary structure, part of the 50S ribosomal subunit. Contacts protein L32.

This is Large ribosomal subunit protein bL17 from Azorhizobium caulinodans (strain ATCC 43989 / DSM 5975 / JCM 20966 / LMG 6465 / NBRC 14845 / NCIMB 13405 / ORS 571).